Consider the following 415-residue polypeptide: Probable beta-1,4-xylosyltransferase IRX10L (415 aa).

Position 1 (M1) is a topological domain, cytoplasmic. The helical; Signal-anchor for type II membrane protein transmembrane segment at 2-22 threads the bilayer; it reads KLSSCVLIFLLCNTFSSISAF. Topologically, residues 23 to 415 are lumenal; the sequence is RLSRSQPTER…AGPVADLKPW (393 aa). N142 and N403 each carry an N-linked (GlcNAc...) asparagine glycan.

It belongs to the glycosyltransferase 47 family. In terms of tissue distribution, present in the xylem and phloem, and, to a lower extent, in interfascicular cells. Expressed in the root tip, shoot apical meristem (SAM), xylem cells of roots and stems, and in the vasculature of roots, cotyledons and leaves.

The protein localises to the golgi apparatus membrane. Its function is as follows. Involved in the synthesis of the hemicellulose glucuronoxylan, a major component of secondary cell walls. Probably involved in the elongation of glucuronoxylan xylosyl backbone. The protein is Probable beta-1,4-xylosyltransferase IRX10L (IRX10L) of Arabidopsis thaliana (Mouse-ear cress).